We begin with the raw amino-acid sequence, 232 residues long: MTQMTFSDRAVMAELVAKMLWEIKAVHFSADKPYKLASGMASPVYIDCRKLISYPRVRSTVMDFAASLIMRDAGFEQFDCVAGGETAGIPFAAFLAERLNLPMIYVRKQPKGHGRNSQIEGHMPDGARVLVIEDLTTAGGSMFTFIDAIRAAGGIVDHGMALFYYGIFPEAEARFANGKVRLHHIATWRNVLAVAKEQKLFDDKTLEEVEAFLNAPLAWSGRNGGVAELATK.

Residues Arg-107, Lys-108, Lys-111, His-113, and 133–141 (EDLTTAGGS) each bind 5-phospho-alpha-D-ribose 1-diphosphate. Thr-137 is a binding site for orotate.

Belongs to the purine/pyrimidine phosphoribosyltransferase family. PyrE subfamily. In terms of assembly, homodimer. Mg(2+) is required as a cofactor.

It catalyses the reaction orotidine 5'-phosphate + diphosphate = orotate + 5-phospho-alpha-D-ribose 1-diphosphate. It participates in pyrimidine metabolism; UMP biosynthesis via de novo pathway; UMP from orotate: step 1/2. Functionally, catalyzes the transfer of a ribosyl phosphate group from 5-phosphoribose 1-diphosphate to orotate, leading to the formation of orotidine monophosphate (OMP). In Rhizobium rhizogenes (strain K84 / ATCC BAA-868) (Agrobacterium radiobacter), this protein is Orotate phosphoribosyltransferase.